Here is a 796-residue protein sequence, read N- to C-terminus: Striatin-3 (796 aa).

An N-acetylmethionine modification is found at Met-1. A compositionally biased stretch (gly residues) spans 1–13 (MDELAGGGGGGQG). Residues 1-60 (MDELAGGGGGGQGMAAPPRPQQGPGGNLSLPPGANGAPGGGGPPAAEAAGPPAGPELSRP) are disordered. The tract at residues 71–79 (YIQHEWARF) is caveolin-binding. Residues 77–136 (ARFEMERAHWEVERAELQARIAFLQGERKGQENLKKDLVRRIKMLEYALKQERAKYHKLK) adopt a coiled-coil conformation. Thr-150 carries the phosphothreonine modification. The interval 166–183 (QNSQLTWKQGRQLLRQYL) is calmodulin-binding. Ser-202, Ser-214, Ser-229, Ser-257, and Ser-334 each carry phosphoserine. Disordered stretches follow at residues 252–271 (ENAD…IPEG) and 311–335 (EDGE…DLSP). Residues 253-264 (NADDSDEEENDM) are compositionally biased toward acidic residues. WD repeat units follow at residues 477–516 (SHFD…PAKK), 530–569 (AHIG…VDPY), 583–622 (AHTD…PCVC), 678–717 (QSSN…MIHS), 720–759 (AHLD…CVQE), and 766–795 (KLDE…AKVF).

The protein belongs to the WD repeat striatin family. In terms of assembly, tetramerizes. Part of the core of STRIPAK complexes composed of PP2A catalytic and scaffolding subunits, the striatins (PP2A regulatory subunits), the striatin-associated proteins MOB4, STRIP1 and STRIP2, PDCD10 and members of the STE20 kinases, such as STK24 and STK26. The STRIPAK complex can be extended by adapter proteins such as SLMAP:SIKE1 or CTTNBP2NL. Interacts with CDC42BPB. Mainly expressed in the brain and muscles but is also detected at low levels in various tissues such as kidney, spleen and lung.

The protein resides in the cytoplasm. It localises to the membrane. Its function is as follows. Calmodulin-binding scaffolding protein which is the center of the striatin-interacting phosphatase and kinase (STRIPAK) complexes. STRIPAK complexes have critical roles in protein (de)phosphorylation and are regulators of multiple signaling pathways including Hippo, MAPK, nuclear receptor and cytoskeleton remodeling. Different types of STRIPAK complexes are involved in a variety of biological processes such as cell growth, differentiation, apoptosis, metabolism and immune regulation. This chain is Striatin-3 (Strn3), found in Mus musculus (Mouse).